Here is a 303-residue protein sequence, read N- to C-terminus: Ornithine carbamoyltransferase (303 aa).

Carbamoyl phosphate is bound by residues 52–55 (STRT), glutamine 79, arginine 103, and 130–133 (HPCQ). L-ornithine contacts are provided by residues asparagine 161, aspartate 222, and 226-227 (SM). Carbamoyl phosphate-binding positions include 262-263 (CL) and arginine 290.

This sequence belongs to the aspartate/ornithine carbamoyltransferase superfamily. OTCase family.

The protein resides in the cytoplasm. The enzyme catalyses carbamoyl phosphate + L-ornithine = L-citrulline + phosphate + H(+). Its pathway is amino-acid biosynthesis; L-arginine biosynthesis; L-arginine from L-ornithine and carbamoyl phosphate: step 1/3. Functionally, reversibly catalyzes the transfer of the carbamoyl group from carbamoyl phosphate (CP) to the N(epsilon) atom of ornithine (ORN) to produce L-citrulline. This Geobacter metallireducens (strain ATCC 53774 / DSM 7210 / GS-15) protein is Ornithine carbamoyltransferase.